Reading from the N-terminus, the 383-residue chain is Lipid-A-disaccharide synthase (383 aa).

Belongs to the LpxB family.

It carries out the reaction a lipid X + a UDP-2-N,3-O-bis[(3R)-3-hydroxyacyl]-alpha-D-glucosamine = a lipid A disaccharide + UDP + H(+). Its pathway is bacterial outer membrane biogenesis; LPS lipid A biosynthesis. Condensation of UDP-2,3-diacylglucosamine and 2,3-diacylglucosamine-1-phosphate to form lipid A disaccharide, a precursor of lipid A, a phosphorylated glycolipid that anchors the lipopolysaccharide to the outer membrane of the cell. The chain is Lipid-A-disaccharide synthase from Anaeromyxobacter dehalogenans (strain 2CP-C).